Here is a 317-residue protein sequence, read N- to C-terminus: Serpentine receptor class delta-47 (317 aa).

Helical transmembrane passes span 8-28, 42-62, 89-109, 128-148, 185-205, 239-259, and 270-290; these read IFYP…FVVV, VLFC…LLQL, CLYF…LLTI, IVII…IYSV, YLII…GLYT, ACLP…VIGT, and ISVL…YSVA.

It belongs to the nematode receptor-like protein srd family.

It localises to the membrane. The protein is Serpentine receptor class delta-47 (srd-47) of Caenorhabditis elegans.